The chain runs to 317 residues: Acetyl-coenzyme A carboxylase carboxyl transferase subunit alpha (317 aa).

In terms of domain architecture, CoA carboxyltransferase C-terminal spans 43–293; that stretch reads RVRESMADIY…GDVISNALGE (251 aa).

It belongs to the AccA family. As to quaternary structure, acetyl-CoA carboxylase is a heterohexamer composed of biotin carboxyl carrier protein (AccB), biotin carboxylase (AccC) and two subunits each of ACCase subunit alpha (AccA) and ACCase subunit beta (AccD).

The protein localises to the cytoplasm. It catalyses the reaction N(6)-carboxybiotinyl-L-lysyl-[protein] + acetyl-CoA = N(6)-biotinyl-L-lysyl-[protein] + malonyl-CoA. It participates in lipid metabolism; malonyl-CoA biosynthesis; malonyl-CoA from acetyl-CoA: step 1/1. Its function is as follows. Component of the acetyl coenzyme A carboxylase (ACC) complex. First, biotin carboxylase catalyzes the carboxylation of biotin on its carrier protein (BCCP) and then the CO(2) group is transferred by the carboxyltransferase to acetyl-CoA to form malonyl-CoA. This chain is Acetyl-coenzyme A carboxylase carboxyl transferase subunit alpha, found in Rhizobium rhizogenes (strain K84 / ATCC BAA-868) (Agrobacterium radiobacter).